The sequence spans 255 residues: Small ribosomal subunit protein eS1 (255 aa).

At Ala-2 the chain carries N-acetylalanine; partial.

It belongs to the eukaryotic ribosomal protein eS1 family. Component of the small ribosomal subunit. Mature ribosomes consist of a small (40S) and a large (60S) subunit. The 40S subunit contains about 33 different proteins and 1 molecule of RNA (18S). The 60S subunit contains about 49 different proteins and 3 molecules of RNA (25S, 5.8S and 5S).

It is found in the cytoplasm. The sequence is that of Small ribosomal subunit protein eS1 (rps1) from Pyrenophora tritici-repentis (strain Pt-1C-BFP) (Wheat tan spot fungus).